Consider the following 300-residue polypeptide: Urease accessory protein UreD (300 aa).

It belongs to the UreD family. UreD, UreF and UreG form a complex that acts as a GTP-hydrolysis-dependent molecular chaperone, activating the urease apoprotein by helping to assemble the nickel containing metallocenter of UreC. The UreE protein probably delivers the nickel.

It is found in the cytoplasm. Required for maturation of urease via the functional incorporation of the urease nickel metallocenter. In Prochlorococcus marinus (strain MIT 9215), this protein is Urease accessory protein UreD.